Consider the following 251-residue polypeptide: uncharacterized protein (251 aa).

Residues N149, N152, and N207 are each glycosylated (N-linked (GlcNAc...) asparagine; by host). Residues 226 to 246 (YLIFIIIIIIFIILILLWIKY) traverse the membrane as a helical segment.

It belongs to the glycosyltransferase 32 family.

The protein resides in the membrane. This is an uncharacterized protein from Acanthamoeba polyphaga (Amoeba).